The chain runs to 478 residues: Aspartyl/glutamyl-tRNA(Asn/Gln) amidotransferase subunit B (478 aa).

The protein belongs to the GatB/GatE family. GatB subfamily. As to quaternary structure, heterotrimer of A, B and C subunits.

It catalyses the reaction L-glutamyl-tRNA(Gln) + L-glutamine + ATP + H2O = L-glutaminyl-tRNA(Gln) + L-glutamate + ADP + phosphate + H(+). The catalysed reaction is L-aspartyl-tRNA(Asn) + L-glutamine + ATP + H2O = L-asparaginyl-tRNA(Asn) + L-glutamate + ADP + phosphate + 2 H(+). In terms of biological role, allows the formation of correctly charged Asn-tRNA(Asn) or Gln-tRNA(Gln) through the transamidation of misacylated Asp-tRNA(Asn) or Glu-tRNA(Gln) in organisms which lack either or both of asparaginyl-tRNA or glutaminyl-tRNA synthetases. The reaction takes place in the presence of glutamine and ATP through an activated phospho-Asp-tRNA(Asn) or phospho-Glu-tRNA(Gln). The polypeptide is Aspartyl/glutamyl-tRNA(Asn/Gln) amidotransferase subunit B (Brevibacillus brevis (strain 47 / JCM 6285 / NBRC 100599)).